The primary structure comprises 159 residues: uncharacterized protein (159 aa).

Disordered regions lie at residues 1-29 (MHQT…TSES) and 114-159 (TRGG…NENT). The span at 15 to 29 (SFSNESPTSRETSES) shows a compositional bias: polar residues.

This is an uncharacterized protein from Homo sapiens (Human).